The sequence spans 91 residues: MSSQVNTTRDSRRKILQGIVVSDKMQKTIVVQVERKSKHRLYKKLVITHKKYHAHDEKEECKIGDFVEIMETRPLSATKRWRLNKIIQKAK.

This sequence belongs to the universal ribosomal protein uS17 family. In terms of assembly, part of the 30S ribosomal subunit.

In terms of biological role, one of the primary rRNA binding proteins, it binds specifically to the 5'-end of 16S ribosomal RNA. This chain is Small ribosomal subunit protein uS17, found in Malacoplasma penetrans (strain HF-2) (Mycoplasma penetrans).